The primary structure comprises 157 residues: Ubiquitin-like protein 4A (157 aa).

A Ubiquitin-like domain is found at 1-76 (MQLTVKALQG…LNLVVKPLEK (76 aa)). Lys-48 participates in a covalent cross-link: Glycyl lysine isopeptide (Lys-Gly) (interchain with G-Cter in ubiquitin). Position 90 is a phosphoserine (Ser-90). The interval 96 to 138 (WQLISKVLARHFSIGDASRVLEQLQRDYDRSLSRLTLDDIERL) is required and sufficient for interaction with BAG6.

In terms of assembly, component of the BAG6/BAT3 complex, at least composed of BAG6, UBL4A and GET4/TRC35. Interacts with BAG6; the interaction is direct and required for UBL4A protein stability. Interacts with USP13; may be indirect via BAG6. Polyubiquitinated. Ubiquitination by AMFR and deubiquitination by USP13 may regulate the interaction between the BAG6/BAT complex and SGTA and therefore may regulate client proteins fate.

Its subcellular location is the cytoplasm. The protein localises to the cytosol. It localises to the nucleus. Functionally, as part of a cytosolic protein quality control complex, the BAG6/BAT3 complex, maintains misfolded and hydrophobic patches-containing proteins in a soluble state and participates in their proper delivery to the endoplasmic reticulum or alternatively can promote their sorting to the proteasome where they undergo degradation. The BAG6/BAT3 complex is involved in the post-translational delivery of tail-anchored/type II transmembrane proteins to the endoplasmic reticulum membrane. Recruited to ribosomes, it interacts with the transmembrane region of newly synthesized tail-anchored proteins and together with SGTA and ASNA1 mediates their delivery to the endoplasmic reticulum. Client proteins that cannot be properly delivered to the endoplasmic reticulum are ubiquitinated and sorted to the proteasome. Similarly, the BAG6/BAT3 complex also functions as a sorting platform for proteins of the secretory pathway that are mislocalized to the cytosol either delivering them to the proteasome for degradation or to the endoplasmic reticulum. The BAG6/BAT3 complex also plays a role in the endoplasmic reticulum-associated degradation (ERAD), a quality control mechanism that eliminates unwanted proteins of the endoplasmic reticulum through their retrotranslocation to the cytosol and their targeting to the proteasome. It maintains these retrotranslocated proteins in an unfolded yet soluble state condition in the cytosol to ensure their proper delivery to the proteasome. This is Ubiquitin-like protein 4A (Ubl4a) from Rattus norvegicus (Rat).